Reading from the N-terminus, the 437-residue chain is MSCRFQSSSMSYGGGFGAGSCQLGGGRNISSCSSRFVTGGSAGGYGGGMSCGFGGGAGGGFGGGFGGGFGGSYGGGFGGGFGDFGGVDGGLLSGNEKITMQNLNDRLASYLDKVRALEAANADLEVKIRDWHLKQSPASPERDYSAYYKTIEELRIKILEATTDNNRIILEIDNARLAADDFRLKYENELTLRQSVEADINGLRRVLDELTLAKTDLEMQIESLNEELAYLKKNHEEEMKEFSNQVVGQVNVEMDATPGIDLTRVLAEMREQYEALAEKNRRDAEEWFQTKSAELNKEVSSNAEMIQTSKTEITELRRTLQGLEIELQSQLSMKAGLESTLAETECRYALQLQQIQGLISSIEAQLSELRSEMECQNQEYKMLLDIKTRLEQEIATYRSLLEGQDAKMTGFNSGGNNTTTSNGSPSSNSGRPDFRKY.

Residues 1–95 (MSCRFQSSSM…GVDGGLLSGN (95 aa)) form a head region. Omega-N-methylarginine occurs at positions 27 and 35. The tract at residues 96 to 131 (EKITMQNLNDRLASYLDKVRALEAANADLEVKIRDW) is coil 1A. The 313-residue stretch at 96–408 (EKITMQNLND…SLLEGQDAKM (313 aa)) folds into the IF rod domain. A linker 1 region spans residues 132-150 (HLKQSPASPERDYSAYYKT). The tract at residues 151–242 (IEELRIKILE…KNHEEEMKEF (92 aa)) is coil 1B. The interval 243–265 (SNQVVGQVNVEMDATPGIDLTRV) is linker 12. The segment at 266–404 (LAEMREQYEA…ATYRSLLEGQ (139 aa)) is coil 2. Positions 405–437 (DAKMTGFNSGGNNTTTSNGSPSSNSGRPDFRKY) are tail. Residues 408–437 (MTGFNSGGNNTTTSNGSPSSNSGRPDFRKY) form a disordered region. The span at 409-430 (TGFNSGGNNTTTSNGSPSSNSG) shows a compositional bias: low complexity.

This sequence belongs to the intermediate filament family. Heterotetramer of two type I and two type II keratins. O-glycosylated; glycans consist of single N-acetylglucosamine residues. As to expression, expressed in tongue epithelia (at protein level). Expressed in upper suprabasal layers of the corneal epithelium (at protein level).

Its function is as follows. Type 1 keratin. Maintains postnatal tongue mucosal cell homeostasis and tissue organization in response to mechanical stress, potentially via regulation of the G1/S phase cyclins CCNE1 and CCNE2. This is Keratin, type I cytoskeletal 13 (Krt13) from Mus musculus (Mouse).